The chain runs to 306 residues: Ribonuclease Z (306 aa).

Zn(2+) contacts are provided by histidine 63, histidine 65, aspartate 67, histidine 68, histidine 141, aspartate 211, and histidine 269. The active-site Proton acceptor is aspartate 67.

Belongs to the RNase Z family. As to quaternary structure, homodimer. Zn(2+) is required as a cofactor.

It carries out the reaction Endonucleolytic cleavage of RNA, removing extra 3' nucleotides from tRNA precursor, generating 3' termini of tRNAs. A 3'-hydroxy group is left at the tRNA terminus and a 5'-phosphoryl group is left at the trailer molecule.. In terms of biological role, zinc phosphodiesterase, which displays some tRNA 3'-processing endonuclease activity. Probably involved in tRNA maturation, by removing a 3'-trailer from precursor tRNA. The protein is Ribonuclease Z of Staphylococcus carnosus (strain TM300).